The following is a 130-amino-acid chain: Small ribosomal subunit protein uS11 (130 aa).

The protein belongs to the universal ribosomal protein uS11 family. In terms of assembly, part of the 30S ribosomal subunit. Interacts with proteins S7 and S18. Binds to IF-3.

In terms of biological role, located on the platform of the 30S subunit, it bridges several disparate RNA helices of the 16S rRNA. Forms part of the Shine-Dalgarno cleft in the 70S ribosome. The protein is Small ribosomal subunit protein uS11 of Shewanella violacea (strain JCM 10179 / CIP 106290 / LMG 19151 / DSS12).